We begin with the raw amino-acid sequence, 185 residues long: 16S rRNA aminocarboxypropyltransferase (185 aa).

Residues Thr-19, Ile-69, Leu-93, Tyr-108, and Thr-112 each contribute to the S-adenosyl-L-methionine site.

The protein belongs to the TDD superfamily. TSR3 family.

It is found in the cytoplasm. The enzyme catalyses an N(1)-methylpseudouridine in rRNA + S-adenosyl-L-methionine = N(1)-methyl-N(3)-[(3S)-3-amino-3-carboxypropyl]pseudouridine in rRNA + S-methyl-5'-thioadenosine + H(+). Aminocarboxypropyltransferase that catalyzes the aminocarboxypropyl transfer on pseudouridine corresponding to position 914 in M.jannaschii 16S rRNA. It constitutes the last step in biosynthesis of the hypermodified N1-methyl-N3-(3-amino-3-carboxypropyl) pseudouridine (m1acp3-Psi). The sequence is that of 16S rRNA aminocarboxypropyltransferase from Vulcanisaeta distributa (strain DSM 14429 / JCM 11212 / NBRC 100878 / IC-017).